We begin with the raw amino-acid sequence, 421 residues long: Serine--tRNA ligase (421 aa).

Residue 232-234 participates in L-serine binding; it reads TAE. 262–264 serves as a coordination point for ATP; the sequence is RSE. Glu-285 is a binding site for L-serine. Position 349-352 (349-352) interacts with ATP; it reads EVSS. Position 384 (Ser-384) interacts with L-serine.

Belongs to the class-II aminoacyl-tRNA synthetase family. Type-1 seryl-tRNA synthetase subfamily. In terms of assembly, homodimer. The tRNA molecule binds across the dimer.

The protein resides in the cytoplasm. The enzyme catalyses tRNA(Ser) + L-serine + ATP = L-seryl-tRNA(Ser) + AMP + diphosphate + H(+). It catalyses the reaction tRNA(Sec) + L-serine + ATP = L-seryl-tRNA(Sec) + AMP + diphosphate + H(+). Its pathway is aminoacyl-tRNA biosynthesis; selenocysteinyl-tRNA(Sec) biosynthesis; L-seryl-tRNA(Sec) from L-serine and tRNA(Sec): step 1/1. Functionally, catalyzes the attachment of serine to tRNA(Ser). Is also able to aminoacylate tRNA(Sec) with serine, to form the misacylated tRNA L-seryl-tRNA(Sec), which will be further converted into selenocysteinyl-tRNA(Sec). This is Serine--tRNA ligase from Mycoplasma mobile (strain ATCC 43663 / 163K / NCTC 11711) (Mesomycoplasma mobile).